A 420-amino-acid polypeptide reads, in one-letter code: 4-hydroxy-3-methylbut-2-en-1-yl diphosphate synthase (flavodoxin) (420 aa).

C307, C310, C353, and E360 together coordinate [4Fe-4S] cluster.

The protein belongs to the IspG family. [4Fe-4S] cluster is required as a cofactor.

It catalyses the reaction (2E)-4-hydroxy-3-methylbut-2-enyl diphosphate + oxidized [flavodoxin] + H2O + 2 H(+) = 2-C-methyl-D-erythritol 2,4-cyclic diphosphate + reduced [flavodoxin]. The protein operates within isoprenoid biosynthesis; isopentenyl diphosphate biosynthesis via DXP pathway; isopentenyl diphosphate from 1-deoxy-D-xylulose 5-phosphate: step 5/6. Functionally, converts 2C-methyl-D-erythritol 2,4-cyclodiphosphate (ME-2,4cPP) into 1-hydroxy-2-methyl-2-(E)-butenyl 4-diphosphate. This chain is 4-hydroxy-3-methylbut-2-en-1-yl diphosphate synthase (flavodoxin), found in Brucella abortus (strain S19).